Here is a 198-residue protein sequence, read N- to C-terminus: Inositol diphosphatase DSP4 (198 aa).

Positions 1-23 (MTLESYAGDVHTVPQSENSMEER) are disordered. The region spanning 34–188 (NFAMVDNGIF…LKHTPLSFSC (155 aa)) is the Tyrosine-protein phosphatase domain. The WPD loop important for active site topology stretch occupies residues 90–102 (FGIERCKEPFVNI). 1D-myo-inositol hexakisphosphate-binding residues include asparagine 101 and isoleucine 102. The Phosphocysteine intermediate role is filled by cysteine 126.

Belongs to the protein-tyrosine phosphatase family. Atypical dual-specificity phosphatase Siw14-like subfamily. As to expression, highly expressed in flowers and at lower levels in roots, leaves, stems and siliques.

It carries out the reaction 5-diphospho-1D-myo-inositol 1,2,3,4,6-pentakisphosphate + H2O = 1D-myo-inositol hexakisphosphate + phosphate + H(+). It catalyses the reaction 1,5-bis(diphospho)-1D-myo-inositol 2,3,4,6-tetrakisphosphate + H2O = 1-diphospho-1D-myo-inositol 2,3,4,5,6-pentakisphosphate + phosphate + 2 H(+). The catalysed reaction is 3,5-bis(diphospho)-1D-myo-inositol 1,2,4,6-tetrakisphosphate + H2O = 3-diphospho-1D-myo-inositol 1,2,4,5,6-pentakisphosphate + phosphate + 2 H(+). The enzyme catalyses 6-diphospho-1D-myo-inositol pentakisphosphate + H2O = 1D-myo-inositol hexakisphosphate + phosphate + H(+). Cleaves the beta-phosphate at the 5-position of soluble inositol pyrophosphates. Has highest activity on 5-diphosphoinositol 1,2,3,4,6-pentakisphosphate (5-InsP(7)), 1,5-bis-diphosphoinositol 2,3,4,6-tetrakisphosphate (1,5-InsP(8)) and 3,5-InsP(8). Acts as a negative regulator of defense responses against the bacterial pathogen Pseudomonas syringae pv tomato strain DC3000. In Arabidopsis thaliana (Mouse-ear cress), this protein is Inositol diphosphatase DSP4.